The following is a 393-amino-acid chain: Ceramide synthase 4 (393 aa).

At 1–31 (MWSSLNDWLWNERLWLPANISWAQLEDHDGL) the chain is on the lumenal side. A glycan (N-linked (GlcNAc...) asparagine) is linked at Asn-19. A helical membrane pass occupies residues 32–52 (VFPHPQDTLMAVPLALALVVV). The segment at 67–128 (WLGVRNQIRR…RRRRNQDRPC (62 aa)) is homeobox-like. Positions 131-332 (KKFCESSWKF…ILCMIYSFIK (202 aa)) constitute a TLC domain. 4 consecutive transmembrane segments (helical) span residues 140–160 (FVFY…ESWL), 179–199 (LYHW…TLPF), 209–229 (QVIH…LNLL), and 260–280 (MCDT…LVLF). Residues 291–301 (ESIGNFSPFFG) carry the Last loop motif motif. The chain crosses the membrane as a helical span at residues 304–324 (FLNILLVILQLLHVFWSWLIL). Residues 325-393 (CMIYSFIKKG…RMVNRHTPAT (69 aa)) lie on the Cytoplasmic side of the membrane. Phosphoserine is present on residues Ser-342, Ser-349, and Ser-350. Over residues 346–356 (ELDSSDGEAAE) the composition is skewed to acidic residues. The disordered stretch occupies residues 346-393 (ELDSSDGEAAEECPQMKNGAAQRPGAAPTDGPRSRAAGRMVNRHTPAT).

In terms of processing, phosphorylated at the C-terminus by CK2.

The protein localises to the endoplasmic reticulum membrane. The catalysed reaction is sphinganine + octadecanoyl-CoA = N-(octadecanoyl)-sphinganine + CoA + H(+). It carries out the reaction eicosanoyl-CoA + sphinganine = N-eicosanoylsphinganine + CoA + H(+). The enzyme catalyses docosanoyl-CoA + sphinganine = N-docosanoylsphinganine + CoA + H(+). It catalyses the reaction tetracosanoyl-CoA + sphinganine = N-tetracosanoylsphinganine + CoA + H(+). The catalysed reaction is hexacosanoyl-CoA + sphinganine = N-hexacosanoylsphinganine + CoA + H(+). It carries out the reaction a fatty acyl-CoA + sphing-4-enine = an N-acylsphing-4-enine + CoA + H(+). The enzyme catalyses sphing-4-enine + octadecanoyl-CoA = N-octadecanoylsphing-4-enine + CoA + H(+). It catalyses the reaction hexadecasphinganine + octadecanoyl-CoA = N-octadecanoylhexadecasphinganine + CoA + H(+). It functions in the pathway lipid metabolism; sphingolipid metabolism. Its function is as follows. Ceramide synthase that catalyzes formation of ceramide from sphinganine and acyl-CoA substrates, with high selectivity toward long and very-long chains (C18:0-C22:0) as acyl donor. The chain is Ceramide synthase 4 from Bos taurus (Bovine).